The following is a 686-amino-acid chain: Potassium-transporting ATPase ATP-binding subunit (686 aa).

2 helical membrane-spanning segments follow: residues 38-58 (VMFVVWAGSLLTTVLVVKDLV) and 64-84 (AAPLGFTVQVTLWLWFTVLFA). Residues 101-123 (ALRKMRKETTARRWKDGREERVP) are disordered. Positions 107 to 123 (KETTARRWKDGREERVP) are enriched in basic and acidic residues. The next 2 membrane-spanning stretches (helical) occupy residues 224–244 (ILLVGLTLIFLLACVTLVPLA) and 257–277 (VALLVCLIPTTIGGLLSAIGI). The 4-aspartylphosphate intermediate role is filled by Asp-308. ATP contacts are provided by residues Asp-345, Glu-349, 378 to 385 (FTAQTRMS), and Lys-399. Mg(2+) is bound by residues Asp-522 and Asp-526. Transmembrane regions (helical) follow at residues 592–612 (FAILPALFMGVFPQIAPLNVM), 620–640 (AVLSAVIFNALIIILLIPLAL), and 666–686 (VIVPFVGIKVIDVLLGAVGLA).

Belongs to the cation transport ATPase (P-type) (TC 3.A.3) family. Type IA subfamily. The system is composed of three essential subunits: KdpA, KdpB and KdpC.

The protein resides in the cell membrane. The catalysed reaction is K(+)(out) + ATP + H2O = K(+)(in) + ADP + phosphate + H(+). Part of the high-affinity ATP-driven potassium transport (or Kdp) system, which catalyzes the hydrolysis of ATP coupled with the electrogenic transport of potassium into the cytoplasm. This subunit is responsible for energy coupling to the transport system and for the release of the potassium ions to the cytoplasm. This chain is Potassium-transporting ATPase ATP-binding subunit, found in Myxococcus xanthus.